The chain runs to 173 residues: Calmodulin-like protein 11 (173 aa).

Positions 1-26 (MEEIQQQQQQQQQQQQQQQQQQQQQQ) are enriched in low complexity. Positions 1-27 (MEEIQQQQQQQQQQQQQQQQQQQQQQE) are disordered. 4 EF-hand domains span residues 31–66 (EQIMEFKEAFCLFDKDGDGCITADELATVIRSLDQN), 67–102 (PTEQELQDMITEIDSDGNGTIEFSEFLNLMANQLQE), 104–139 (DADEELKEAFKVFDKDQNGYISASELRHVMINLGEK), and 140–173 (LTDEEVDQMIKEADLDGDGQVNYDEFVRMMMING). Positions 44, 46, 48, 50, 55, 80, 82, 84, 86, 91, 117, 119, 121, 123, 128, 153, 155, 157, 159, and 164 each coordinate Ca(2+).

The protein belongs to the calmodulin family.

In terms of biological role, potential calcium sensor. This is Calmodulin-like protein 11 (CML11) from Arabidopsis thaliana (Mouse-ear cress).